A 140-amino-acid polypeptide reads, in one-letter code: Organic hydroperoxide resistance protein-like (140 aa).

This sequence belongs to the OsmC/Ohr family.

This chain is Organic hydroperoxide resistance protein-like, found in Staphylococcus aureus (strain MRSA252).